The following is a 4870-amino-acid chain: Malformin synthetase mlfA (4870 aa).

The adenylation 1 stretch occupies residues 106–497 (ERRAANRPHS…CGRADTQVKL (392 aa)). In terms of domain architecture, Carrier 1 spans 635–711 (LGLSQLEQEI…EASSLAEVQE (77 aa)). Position 672 is an O-(pantetheine 4'-phosphoryl)serine (Ser672). The segment at 749–1133 (EDVFPCTTMQ…ALNTLTLLQA (385 aa)) is condensation 1. The adenylation 2 stretch occupies residues 1161 to 1550 (DRWVTRQPES…GRKDTQVKLR (390 aa)). The Carrier 2 domain maps to 1688–1765 (TASSKLELTL…QLAAILGEAT (78 aa)). Ser1725 carries the O-(pantetheine 4'-phosphoryl)serine modification. Disordered stretches follow at residues 1764 to 1794 (ATGQ…NDGV) and 1829 to 1859 (GSSS…VSPV). Low complexity-rich tracts occupy residues 1769–1792 (ESSA…STND) and 1830–1846 (SSSC…SSSS). The interval 1898–2313 (EDIYPATALQ…GVSYRDKQTL (416 aa)) is condensation 2. Residues 2336–2728 (VRTPHAPAVF…IGRRDGQLKL (393 aa)) form an adenylation 3 region. Residues 2864–2940 (RPATAQEREM…QLMRHLSANG (77 aa)) form the Carrier 3 domain. Ser2901 carries the O-(pantetheine 4'-phosphoryl)serine modification. 2 condensation regions span residues 2957-3422 (WVPL…TYDQ) and 3443-3862 (DIYP…EQLV). The tract at residues 3887–4277 (HSSREAACAW…VGRKDNQIKF (391 aa)) is adenylation 4. In terms of domain architecture, Carrier 4 spans 4411 to 4487 (MPFTAAECKM…DLAYRTANLV (77 aa)). O-(pantetheine 4'-phosphoryl)serine is present on Ser4448. Positions 4524-4837 (EVLPTTSFQR…LQTIVQHQNN (314 aa)) are condensation 5.

The protein belongs to the NRP synthetase family.

It functions in the pathway secondary metabolite biosynthesis. Its function is as follows. Nonribosomal peptide synthetase; part of the gene cluster that mediates the biosynthesis of malformins, cyclic pentapeptides with a disulfide bond between 2 consecutive cysteins, that show potential anti-tumor as well as antimalarial and antitrypanosomal properties. The nonribosomal peptide synthetase mlfA is responsible of the formation of the cyclic pentapeptide. The malformin biosynthesis clusters in malformin-producing fungi also contain enzymes involved in the formation of the disulfide bond between the two consecutive cysteins within malformins, in addition to additional tailoring enzymes such as methyltransferases or oxidoreductases. They are also composed of up to 4 major facilitator superfamily transporters, and transcription factors probably involved in the regulation of the expression of those clusters. This chain is Malformin synthetase mlfA, found in Aspergillus niger (strain ATCC 1015 / CBS 113.46 / FGSC A1144 / LSHB Ac4 / NCTC 3858a / NRRL 328 / USDA 3528.7).